Reading from the N-terminus, the 115-residue chain is Large ribosomal subunit protein bL20 (115 aa).

The protein belongs to the bacterial ribosomal protein bL20 family.

Its function is as follows. Binds directly to 23S ribosomal RNA and is necessary for the in vitro assembly process of the 50S ribosomal subunit. It is not involved in the protein synthesizing functions of that subunit. The protein is Large ribosomal subunit protein bL20 of Chlorobium phaeovibrioides (strain DSM 265 / 1930) (Prosthecochloris vibrioformis (strain DSM 265)).